Reading from the N-terminus, the 114-residue chain is SCP2 domain-containing protein YusD (114 aa).

One can recognise an SCP2 domain in the interval 21 to 101 (NASTLLITFQ…RALLKLEAIL (81 aa)).

The chain is SCP2 domain-containing protein YusD (yusD) from Bacillus subtilis (strain 168).